The chain runs to 222 residues: Small ribosomal subunit protein uS2 (222 aa).

Belongs to the universal ribosomal protein uS2 family.

The polypeptide is Small ribosomal subunit protein uS2 (Karelsulcia muelleri (strain GWSS) (Sulcia muelleri)).